Here is a 99-residue protein sequence, read N- to C-terminus: MKLIFDIQLFAHKKAGGSTRNGRDSESKRLGVKRSDGQFVLAGNILVRQRGTKFHPGKNVGRGGDDTLFALVTGYVKFENKRGRKVVSVIPAEEMVAVQ.

The propeptide occupies 1-10 (MKLIFDIQLF).

It belongs to the bacterial ribosomal protein bL27 family. Post-translationally, the N-terminus is cleaved by ribosomal processing cysteine protease Prp.

This Caldicellulosiruptor bescii (strain ATCC BAA-1888 / DSM 6725 / KCTC 15123 / Z-1320) (Anaerocellum thermophilum) protein is Large ribosomal subunit protein bL27.